The following is a 95-amino-acid chain: Co-chaperonin GroES (95 aa).

Belongs to the GroES chaperonin family. In terms of assembly, heptamer of 7 subunits arranged in a ring. Interacts with the chaperonin GroEL.

It localises to the cytoplasm. Its function is as follows. Together with the chaperonin GroEL, plays an essential role in assisting protein folding. The GroEL-GroES system forms a nano-cage that allows encapsulation of the non-native substrate proteins and provides a physical environment optimized to promote and accelerate protein folding. GroES binds to the apical surface of the GroEL ring, thereby capping the opening of the GroEL channel. The chain is Co-chaperonin GroES from Desulfotalea psychrophila (strain LSv54 / DSM 12343).